The sequence spans 160 residues: Cyclic di-GMP-binding protein Smlt4090 (160 aa).

The 3',3'-c-di-GMP site is built by lysine 33, lysine 132, arginine 134, aspartate 135, and aspartate 160.

Belongs to the YajQ family.

Its function is as follows. Cyclic di-GMP effector that significantly contributes to virulence. Binds bis-(3',5')-cyclic diguanylate (cyclic di-GMP or c-di-GMP), an important bacterial second messenger that controls a wide range of cellular processes. The polypeptide is Cyclic di-GMP-binding protein Smlt4090 (Stenotrophomonas maltophilia (strain K279a)).